The following is a 617-amino-acid chain: COMPASS component cclA (617 aa).

Low complexity-rich tracts occupy residues 1–19 (MASIQPAGSSAPSSNINSP) and 40–50 (SSPAPASNASA). Residues 1–89 (MASIQPAGSS…AKKRATAVQN (89 aa)) form a disordered region. Residues 57-69 (SKRNKRDSRKKRE) are compositionally biased toward basic residues. One can recognise a B30.2/SPRY domain in the interval 157 to 380 (IADTSFPHIK…YAFNLKETPT (224 aa)). Residues 595-617 (TPNTEEPAARPENITVGHDVEMS) are disordered.

This sequence belongs to the cclA family. In terms of assembly, component of the COMPASS complex.

It is found in the nucleus. The protein localises to the chromosome. The protein resides in the telomere. Functionally, component of the COMPASS (Set1C) complex that specifically mono-, di- and trimethylates histone H3 to form H3K4me1/2/3, which subsequently plays a role in telomere length maintenance and transcription elongation regulation. Controls the production of several secondary metabolites, including astellolides. The chain is COMPASS component cclA from Aspergillus oryzae (strain ATCC 42149 / RIB 40) (Yellow koji mold).